The following is a 206-amino-acid chain: 3-demethoxyubiquinol 3-hydroxylase (206 aa).

The Fe cation site is built by E55, E85, H88, E137, E169, and H172.

This sequence belongs to the COQ7 family. Fe cation serves as cofactor.

It is found in the cell membrane. It catalyses the reaction a 5-methoxy-2-methyl-3-(all-trans-polyprenyl)benzene-1,4-diol + AH2 + O2 = a 3-demethylubiquinol + A + H2O. It participates in cofactor biosynthesis; ubiquinone biosynthesis. In terms of biological role, catalyzes the hydroxylation of 2-nonaprenyl-3-methyl-6-methoxy-1,4-benzoquinol during ubiquinone biosynthesis. The polypeptide is 3-demethoxyubiquinol 3-hydroxylase (Laribacter hongkongensis (strain HLHK9)).